We begin with the raw amino-acid sequence, 117 residues long: Large ribosomal subunit protein bL20 (117 aa).

It belongs to the bacterial ribosomal protein bL20 family.

In terms of biological role, binds directly to 23S ribosomal RNA and is necessary for the in vitro assembly process of the 50S ribosomal subunit. It is not involved in the protein synthesizing functions of that subunit. This is Large ribosomal subunit protein bL20 from Nitratidesulfovibrio vulgaris (strain DSM 19637 / Miyazaki F) (Desulfovibrio vulgaris).